A 2241-amino-acid polypeptide reads, in one-letter code: Large tegument protein deneddylase (2241 aa).

Residues 1-238 (MKVTQASCHQ…IDLTGVVRES (238 aa)) form a deubiquitination activity region. Positions 4-226 (TQASCHQGDI…AARLVSTYRD (223 aa)) constitute a Peptidase C76 domain. Catalysis depends on residues C24, D160, and H162. Residues 239-314 (ADTAATTTTA…STTSKTLATA (76 aa)) form a disordered region. Residues 240-250 (DTAATTTTAAP) are compositionally biased toward low complexity. The span at 251–268 (SLPPLPDPIVDPGCPPGV) shows a compositional bias: pro residues. Positions 304-314 (PSTTSKTLATA) are enriched in low complexity. Residues 327 to 331 (SSAVP) are interaction with inner tegument protein. A disordered region spans residues 1170 to 1229 (RSSQQKMEEQLQETRQQMTETSERLDRSLRQDPGSSSVTRVPEKPFKGQELAGRITPPPA). Residues 1190–1199 (TSERLDRSLR) are compositionally biased toward basic and acidic residues.

The protein belongs to the herpesviridae large tegument protein family. Interacts with host CUL1 and CUL4A; these interactions inhibit the E3 ligase activity of cullins. Interacts with inner tegument protein. Interacts with capsid vertex specific component CVC2. Interacts with the major capsid protein/MCP.

It is found in the virion tegument. Its subcellular location is the host cytoplasm. It localises to the host nucleus. It catalyses the reaction Thiol-dependent hydrolysis of ester, thioester, amide, peptide and isopeptide bonds formed by the C-terminal Gly of ubiquitin (a 76-residue protein attached to proteins as an intracellular targeting signal).. Its function is as follows. Large tegument protein that plays multiple roles in the viral cycle. During viral entry, remains associated with the capsid while most of the tegument is detached and participates in the capsid transport toward the host nucleus. Plays a role in the routing of the capsid at the nuclear pore complex and subsequent uncoating. Within the host nucleus, acts as a deneddylase and promotes the degradation of nuclear CRLs (cullin-RING ubiquitin ligases) and thereby stabilizes nuclear CRL substrates, while cytoplasmic CRLs remain unaffected. These modifications prevent host cell cycle S-phase progression and create a favorable environment allowing efficient viral genome replication. Participates later in the secondary envelopment of capsids. Indeed, plays a linker role for the association of the outer viral tegument to the capsids together with the inner tegument protein. In Human cytomegalovirus (strain AD169) (HHV-5), this protein is Large tegument protein deneddylase (UL48).